The primary structure comprises 168 residues: ATP synthase subunit b (168 aa).

A helical membrane pass occupies residues N11–L31.

It belongs to the ATPase B chain family. In terms of assembly, F-type ATPases have 2 components, F(1) - the catalytic core - and F(0) - the membrane proton channel. F(1) has five subunits: alpha(3), beta(3), gamma(1), delta(1), epsilon(1). F(0) has three main subunits: a(1), b(2) and c(10-14). The alpha and beta chains form an alternating ring which encloses part of the gamma chain. F(1) is attached to F(0) by a central stalk formed by the gamma and epsilon chains, while a peripheral stalk is formed by the delta and b chains.

The protein localises to the cell membrane. In terms of biological role, f(1)F(0) ATP synthase produces ATP from ADP in the presence of a proton or sodium gradient. F-type ATPases consist of two structural domains, F(1) containing the extramembraneous catalytic core and F(0) containing the membrane proton channel, linked together by a central stalk and a peripheral stalk. During catalysis, ATP synthesis in the catalytic domain of F(1) is coupled via a rotary mechanism of the central stalk subunits to proton translocation. Its function is as follows. Component of the F(0) channel, it forms part of the peripheral stalk, linking F(1) to F(0). This chain is ATP synthase subunit b, found in Lactococcus lactis subsp. lactis (strain IL1403) (Streptococcus lactis).